Reading from the N-terminus, the 118-residue chain is MIKGIGLDMIDLERVKQVVEKNPRFIERVLTEKEIKQFEKYEGNRKIEFLAGRFAAKEAYAKANGTGFGKHLSFTDVEILQVEDGRPHVTLPVKSGENVFVSITHTARSAAAQVIIEI.

Mg(2+)-binding residues include aspartate 8 and glutamate 58.

This sequence belongs to the P-Pant transferase superfamily. AcpS family. Mg(2+) is required as a cofactor.

Its subcellular location is the cytoplasm. It catalyses the reaction apo-[ACP] + CoA = holo-[ACP] + adenosine 3',5'-bisphosphate + H(+). Transfers the 4'-phosphopantetheine moiety from coenzyme A to a Ser of acyl-carrier-protein. This chain is Holo-[acyl-carrier-protein] synthase, found in Listeria monocytogenes serotype 4b (strain CLIP80459).